A 429-amino-acid polypeptide reads, in one-letter code: Endoglucanase A (429 aa).

Positions 1–34 (MVSKKQKFLTVILVIVLAIVIVGGVFGISFVKGR) are cleaved as a signal peptide. Residues 46–94 (AKTEQVKEPAKEEPKLVIKEKKQDESAKKEQELKKAKEEAEAAVEKETE) show a composition bias toward basic and acidic residues. A disordered region spans residues 46 to 100 (AKTEQVKEPAKEEPKLVIKEKKQDESAKKEQELKKAKEEAEAAVEKETEKTEEEP). E249 serves as the catalytic Proton donor. Catalysis depends on E334, which acts as the Nucleophile.

This sequence belongs to the glycosyl hydrolase 5 (cellulase A) family.

The enzyme catalyses Endohydrolysis of (1-&gt;4)-beta-D-glucosidic linkages in cellulose, lichenin and cereal beta-D-glucans.. This Butyrivibrio fibrisolvens protein is Endoglucanase A (celA).